Consider the following 451-residue polypeptide: tRNA modification GTPase MnmE (451 aa).

3 residues coordinate (6S)-5-formyl-5,6,7,8-tetrahydrofolate: R28, E85, and K124. Residues 220-373 (GLYTVLVGPP…LKTRLRTLLL (154 aa)) enclose the TrmE-type G domain. A K(+)-binding site is contributed by N230. Residues 230–235 (NVGKSS), 249–255 (TDVPGTT), and 274–277 (DTAG) each bind GTP. S234 lines the Mg(2+) pocket. T249, V251, and T254 together coordinate K(+). T255 contributes to the Mg(2+) binding site. K451 contacts (6S)-5-formyl-5,6,7,8-tetrahydrofolate.

Belongs to the TRAFAC class TrmE-Era-EngA-EngB-Septin-like GTPase superfamily. TrmE GTPase family. Homodimer. Heterotetramer of two MnmE and two MnmG subunits. K(+) is required as a cofactor.

Its subcellular location is the cytoplasm. Functionally, exhibits a very high intrinsic GTPase hydrolysis rate. Involved in the addition of a carboxymethylaminomethyl (cmnm) group at the wobble position (U34) of certain tRNAs, forming tRNA-cmnm(5)s(2)U34. The polypeptide is tRNA modification GTPase MnmE (Xylella fastidiosa (strain 9a5c)).